A 199-amino-acid chain; its full sequence is HTH-type transcriptional repressor NemR (199 aa).

The HTH tetR-type domain occupies 7–67; that stretch reads HDTREHLLAT…AMLERHYAAY (61 aa). A DNA-binding region (H-T-H motif) is located at residues 30 to 49; sequence GLSELLKTAEVPKGSFYHYF.

Functionally, involved in response to both electrophiles and reactive chlorine species (RCS). Represses the transcription of the nemRA-gloA operon by binding to the NemR box. The chain is HTH-type transcriptional repressor NemR (nemR) from Escherichia coli O6:H1 (strain CFT073 / ATCC 700928 / UPEC).